We begin with the raw amino-acid sequence, 352 residues long: C-C chemokine receptor type 5 (352 aa).

The Extracellular segment spans residues 1 to 30 (MDYQVSSPTYDIDYYTSEPCQKVNVKQIAA). Sulfotyrosine is present on tyrosine 3. 2 O-linked (GalNAc...) serine glycosylation sites follow: serine 6 and serine 7. Tyrosine 10, tyrosine 14, and tyrosine 15 each carry sulfotyrosine. Disulfide bonds link cysteine 20–cysteine 269 and cysteine 101–cysteine 178. The chain crosses the membrane as a helical span at residues 31–58 (RLLPPLYSLVFIFGFVGNILVVLILINC). At 59 to 68 (KRLKSMTDIY) the chain is on the cytoplasmic side. The chain crosses the membrane as a helical span at residues 69-89 (LLNLAISDLFFLLTVPFWAHY). Over 90 to 102 (AAAQWDFGNTMCQ) the chain is Extracellular. Residues 103–124 (LLTGLYFIGFFSGIFFIILLTI) traverse the membrane as a helical segment. The Cytoplasmic segment spans residues 125–141 (DRYLAIVHAVFALKART). The helical transmembrane segment at 142–166 (VTFGVVTSVITWVVAVFASLPGIIF) threads the bilayer. The Extracellular portion of the chain corresponds to 167-198 (TRSQREGLHYTCSSHFPYSQYQFWKNFQTLKI). The chain crosses the membrane as a helical span at residues 199-218 (VILGLVLPLLVMVICYSGIL). Over 219-235 (KTLLRCRNEKKRHRAVR) the chain is Cytoplasmic. A helical transmembrane segment spans residues 236 to 260 (LIFTIMIVYFLFWAPYNIVLLLNTF). Over 261–277 (QEFFGLNNCSSSNRLDQ) the chain is Extracellular. A helical transmembrane segment spans residues 278–301 (AMQVTETLGMTHCCINPIIYAFVG). The Cytoplasmic portion of the chain corresponds to 302-352 (EKFRNYLLVFFQKHIAKRFCKCCRIFQQEAPERASSVYTRSTGEQEISVGL). Residues cysteine 321, cysteine 323, and cysteine 324 are each lipidated (S-palmitoyl cysteine). Phosphoserine; by BARK1 is present on residues serine 336, serine 337, serine 342, and serine 349.

Belongs to the G-protein coupled receptor 1 family. As to quaternary structure, interacts with PRAF2. Efficient ligand binding to CCL3/MIP-1alpha and CCL4/MIP-1beta requires sulfation, O-glycosylation and sialic acid modifications. Glycosylation on Ser-6 is required for efficient binding of CCL4. Interacts with GRK2. Interacts with ARRB1 and ARRB2. Interacts with CNIH4. Interacts with S100A4; this interaction stimulates T-lymphocyte chemotaxis. In terms of processing, sulfated on at least 2 of the N-terminal tyrosines. Sulfation is required for efficient binding of the chemokines, CCL3 and CCL4. Palmitoylation in the C-terminal is important for cell surface expression. Post-translationally, phosphorylation on serine residues in the C-terminal is stimulated by binding CC chemokines especially by APO-RANTES. In terms of processing, O-glycosylated, but not N-glycosylated. Ser-6 appears to be the major site even if Ser-7 may be also O-glycosylated. Also sialylated glycans present which contribute to chemokine binding. Thr-16 and Ser-17 may also be glycosylated and, if so, with small moieties such as a T-antigen.

The protein resides in the cell membrane. Receptor for a number of inflammatory CC-chemokines including CCL3/MIP-1-alpha, CCL4/MIP-1-beta and RANTES and subsequently transduces a signal by increasing the intracellular calcium ion level. May play a role in the control of granulocytic lineage proliferation or differentiation. Participates in T-lymphocyte migration to the infection site by acting as a chemotactic receptor. This is C-C chemokine receptor type 5 (CCR5) from Colobus polykomos (Western black-and-white colobus monkey).